Reading from the N-terminus, the 331-residue chain is Ketol-acid reductoisomerase (NADP(+)) (331 aa).

A KARI N-terminal Rossmann domain is found at Thr-2–Thr-181. NADP(+) is bound by residues Tyr-25–Gln-28, Arg-48, Ser-52, and Asp-82–Gln-85. The active site involves His-107. Gly-133 serves as a coordination point for NADP(+). Residues Thr-182 to Val-327 form the KARI C-terminal knotted domain. Positions 190, 194, 226, and 230 each coordinate Mg(2+). Ser-251 provides a ligand contact to substrate.

The protein belongs to the ketol-acid reductoisomerase family. Mg(2+) is required as a cofactor.

It catalyses the reaction (2R)-2,3-dihydroxy-3-methylbutanoate + NADP(+) = (2S)-2-acetolactate + NADPH + H(+). It carries out the reaction (2R,3R)-2,3-dihydroxy-3-methylpentanoate + NADP(+) = (S)-2-ethyl-2-hydroxy-3-oxobutanoate + NADPH + H(+). Its pathway is amino-acid biosynthesis; L-isoleucine biosynthesis; L-isoleucine from 2-oxobutanoate: step 2/4. It functions in the pathway amino-acid biosynthesis; L-valine biosynthesis; L-valine from pyruvate: step 2/4. Its function is as follows. Involved in the biosynthesis of branched-chain amino acids (BCAA). Catalyzes an alkyl-migration followed by a ketol-acid reduction of (S)-2-acetolactate (S2AL) to yield (R)-2,3-dihydroxy-isovalerate. In the isomerase reaction, S2AL is rearranged via a Mg-dependent methyl migration to produce 3-hydroxy-3-methyl-2-ketobutyrate (HMKB). In the reductase reaction, this 2-ketoacid undergoes a metal-dependent reduction by NADPH to yield (R)-2,3-dihydroxy-isovalerate. The chain is Ketol-acid reductoisomerase (NADP(+)) from Listeria innocua serovar 6a (strain ATCC BAA-680 / CLIP 11262).